A 155-amino-acid polypeptide reads, in one-letter code: Arginine repressor (155 aa).

This sequence belongs to the ArgR family.

It localises to the cytoplasm. It participates in amino-acid biosynthesis; L-arginine biosynthesis [regulation]. Regulates arginine biosynthesis genes. The sequence is that of Arginine repressor from Histophilus somni (strain 2336) (Haemophilus somnus).